Consider the following 233-residue polypeptide: ATP-dependent Clp protease proteolytic subunit 1 (233 aa).

Serine 136 functions as the Nucleophile in the catalytic mechanism. The active site involves histidine 161.

Belongs to the peptidase S14 family. As to quaternary structure, fourteen ClpP subunits assemble into 2 heptameric rings which stack back to back to give a disk-like structure with a central cavity, resembling the structure of eukaryotic proteasomes.

It is found in the cytoplasm. It carries out the reaction Hydrolysis of proteins to small peptides in the presence of ATP and magnesium. alpha-casein is the usual test substrate. In the absence of ATP, only oligopeptides shorter than five residues are hydrolyzed (such as succinyl-Leu-Tyr-|-NHMec, and Leu-Tyr-Leu-|-Tyr-Trp, in which cleavage of the -Tyr-|-Leu- and -Tyr-|-Trp bonds also occurs).. Functionally, cleaves peptides in various proteins in a process that requires ATP hydrolysis. Has a chymotrypsin-like activity. Plays a major role in the degradation of misfolded proteins. This chain is ATP-dependent Clp protease proteolytic subunit 1, found in Bifidobacterium longum (strain NCC 2705).